Here is a 205-residue protein sequence, read N- to C-terminus: Urease accessory protein UreE (205 aa).

The span at 178–196 shows a compositional bias: basic residues; that stretch reads AHFHAGGHGHVHSGHGHGG. Residues 178–205 form a disordered region; the sequence is AHFHAGGHGHVHSGHGHGGKHGEHDAES.

This sequence belongs to the UreE family.

It is found in the cytoplasm. In terms of biological role, involved in urease metallocenter assembly. Binds nickel. Probably functions as a nickel donor during metallocenter assembly. This chain is Urease accessory protein UreE, found in Bordetella pertussis (strain Tohama I / ATCC BAA-589 / NCTC 13251).